We begin with the raw amino-acid sequence, 128 residues long: Ribonuclease P protein component (128 aa).

It belongs to the RnpA family. In terms of assembly, consists of a catalytic RNA component (M1 or rnpB) and a protein subunit.

It catalyses the reaction Endonucleolytic cleavage of RNA, removing 5'-extranucleotides from tRNA precursor.. Its function is as follows. RNaseP catalyzes the removal of the 5'-leader sequence from pre-tRNA to produce the mature 5'-terminus. It can also cleave other RNA substrates such as 4.5S RNA. The protein component plays an auxiliary but essential role in vivo by binding to the 5'-leader sequence and broadening the substrate specificity of the ribozyme. In Synechococcus sp. (strain CC9902), this protein is Ribonuclease P protein component.